The sequence spans 145 residues: Large ribosomal subunit protein uL13 (145 aa).

This sequence belongs to the universal ribosomal protein uL13 family. As to quaternary structure, part of the 50S ribosomal subunit.

Functionally, this protein is one of the early assembly proteins of the 50S ribosomal subunit, although it is not seen to bind rRNA by itself. It is important during the early stages of 50S assembly. This is Large ribosomal subunit protein uL13 from Brevibacillus brevis (strain 47 / JCM 6285 / NBRC 100599).